The primary structure comprises 186 residues: Elongation factor P (186 aa).

Belongs to the elongation factor P family.

It is found in the cytoplasm. The protein operates within protein biosynthesis; polypeptide chain elongation. In terms of biological role, involved in peptide bond synthesis. Stimulates efficient translation and peptide-bond synthesis on native or reconstituted 70S ribosomes in vitro. Probably functions indirectly by altering the affinity of the ribosome for aminoacyl-tRNA, thus increasing their reactivity as acceptors for peptidyl transferase. The chain is Elongation factor P from Streptococcus pneumoniae (strain Hungary19A-6).